The chain runs to 509 residues: 2,3-bisphosphoglycerate-independent phosphoglycerate mutase (509 aa).

Mn(2+) is bound at residue Asp11. Phosphotyrosine is present on Tyr35. Ser61 contacts Mn(2+). Ser61 acts as the Phosphoserine intermediate in catalysis. Substrate is bound by residues His122, 152–153 (RD), Arg184, Arg190, 260–263 (RPDR), and Lys335. Mn(2+) contacts are provided by Asp402, His406, Asp443, His444, and His461.

It belongs to the BPG-independent phosphoglycerate mutase family. In terms of assembly, monomer. The cofactor is Mn(2+).

The enzyme catalyses (2R)-2-phosphoglycerate = (2R)-3-phosphoglycerate. It participates in carbohydrate degradation; glycolysis; pyruvate from D-glyceraldehyde 3-phosphate: step 3/5. Essential for rapid growth and for sporulation. Catalyzes the interconversion of 2-phosphoglycerate and 3-phosphoglycerate. This is 2,3-bisphosphoglycerate-independent phosphoglycerate mutase from Bacillus cereus (strain ATCC 10987 / NRS 248).